The sequence spans 61 residues: Small ribosomal subunit protein uS14 (61 aa).

Zn(2+) contacts are provided by cysteine 24, cysteine 27, cysteine 40, and cysteine 43.

Belongs to the universal ribosomal protein uS14 family. Zinc-binding uS14 subfamily. Part of the 30S ribosomal subunit. Contacts proteins S3 and S10. Zn(2+) serves as cofactor.

Its function is as follows. Binds 16S rRNA, required for the assembly of 30S particles and may also be responsible for determining the conformation of the 16S rRNA at the A site. The chain is Small ribosomal subunit protein uS14 from Nitratidesulfovibrio vulgaris (strain ATCC 29579 / DSM 644 / CCUG 34227 / NCIMB 8303 / VKM B-1760 / Hildenborough) (Desulfovibrio vulgaris).